A 117-amino-acid polypeptide reads, in one-letter code: Probable non-functional T cell receptor gamma variable (117 aa).

The first 20 residues, 1-20 (MRWALAVLLAFLSPASQISS), serve as a signal peptide directing secretion. In terms of domain architecture, Ig-like spans 21–117 (NLEGRTKSVT…GFYYCATWDR (97 aa)). Cys-41 and Cys-112 are disulfide-bonded. An N-linked (GlcNAc...) asparagine glycan is attached at Asn-105.

As to quaternary structure, gamma-delta TR is a heterodimer composed of a gamma and delta chain; disulfide-linked. The gamma-delta TR is associated with the transmembrane signaling CD3 coreceptor proteins following the stoichiometry: a single gamma-delta TR heterodimer associates with one CD3D-CD3E heterodimer, one CD3G-CD3E heterodimer and one CD247 homodimer forming a stable octameric structure. Upon activation, gamma-delta TR complex associates with FCER1G to initiate intracellular signaling.

It localises to the cell membrane. Functionally, probable non-functional open reading frame (ORF) of V region of the variable domain of T cell receptor (TR) gamma chain. Non-functional ORF generally cannot participate in the synthesis of a productive T cell receptor (TR) chain due to altered V-(D)-J or switch recombination and/or splicing site (at mRNA level) and/or conserved amino acid change (protein level). Gamma-delta TRs recognize a variety of self and foreign non-peptide antigens frequently expressed at the epithelial boundaries between the host and external environment, including endogenous lipids presented by MH-like protein CD1D and phosphoantigens presented by butyrophilin-like molecule BTN3A1. Upon antigen recognition induces rapid, innate-like immune responses involved in pathogen clearance and tissue repair. Binding of gamma-delta TR complex to antigen triggers phosphorylation of immunoreceptor tyrosine-based activation motifs (ITAMs) in the CD3 chains by the LCK and FYN kinases, allowing the recruitment, phosphorylation, and activation of ZAP70 that facilitates phosphorylation of the scaffolding proteins LCP2 and LAT. This lead to the formation of a supramolecular signalosome that recruits the phospholipase PLCG1, resulting in calcium mobilization and ERK activation, ultimately leading to T cell expansion and differentiation into effector cells. Gamma-delta TRs are produced through somatic rearrangement of a limited repertoire of variable (V), diversity (D), and joining (J) genes. The potential diversity of gamma-delta TRs is conferred by the unique ability to rearrange (D) genes in tandem and to utilize all three reading frames. The combinatorial diversity is considerably increased by the sequence exonuclease trimming and random nucleotide (N) region additions which occur during the V-(D)-J rearrangements. This is Probable non-functional T cell receptor gamma variable from Homo sapiens (Human).